The following is a 210-amino-acid chain: Redox-sensing transcriptional repressor Rex (210 aa).

A DNA-binding region (H-T-H motif) is located at residues 16–55 (IYSRYLRQLIEEGVETVSSGEIAAGVGVSSAQVRKDLAYF). 90 to 95 (GAGKLG) provides a ligand contact to NAD(+).

Belongs to the transcriptional regulatory Rex family. Homodimer.

The protein resides in the cytoplasm. Modulates transcription in response to changes in cellular NADH/NAD(+) redox state. The chain is Redox-sensing transcriptional repressor Rex from Syntrophomonas wolfei subsp. wolfei (strain DSM 2245B / Goettingen).